The following is a 491-amino-acid chain: Serine/threonine-protein kinase 3 (491 aa).

Met1 carries the post-translational modification N-acetylmethionine. A Phosphoserine modification is found at Ser15. One can recognise a Protein kinase domain in the interval 27 to 278 (FDVLEKLGEG…ATQLLQHPFI (252 aa)). Residues 33 to 41 (LGEGSYGSV) and Lys56 each bind ATP. Residue Thr117 is modified to Phosphothreonine; by PKB/AKT1. Asp146 acts as the Proton acceptor in catalysis. The Mg(2+) site is built by Asn151 and Asp164. The residue at position 180 (Thr180) is a Phosphothreonine; by autocatalysis. A coiled-coil region spans residues 291–324 (ITEGMEIKAKRHEEQQRELEDEEENSDEDELDSH). Disordered stretches follow at residues 301-343 (RHEE…TSTM) and 370-392 (EDEE…QRPS). The segment covering 309 to 321 (LEDEEENSDEDEL) has biased composition (acidic residues). A Phosphoserine modification is found at Ser316. The segment covering 326-343 (MVKTSSEGVGTMRATSTM) has biased composition (polar residues). Residues Thr336 and Thr378 each carry the phosphothreonine modification. A compositionally biased stretch (polar residues) spans 381–390 (RNATSPQVQR). Thr384 bears the Phosphothreonine; by PKB/AKT1 mark. Phosphoserine occurs at positions 385 and 444. The 48-residue stretch at 437-484 (FDFLKNLSLEELQMRLKALDPMMEREIEELHQRYSAKRQPILDAMDAK) folds into the SARAH domain.

This sequence belongs to the protein kinase superfamily. STE Ser/Thr protein kinase family. STE20 subfamily. As to quaternary structure, homodimer; mediated via the coiled-coil region. Interacts with NORE1, which inhibits autoactivation. Interacts with and stabilizes SAV1. Interacts with RAF1, which prevents dimerization and phosphorylation. Interacts with RASSF1. Interacts (via SARAH domain) with isoform 1 of NEK2. Interacts with ESR1 only in the presence of SAV1. Interacts with PKB/AKT1. Forms a tripartite complex with MOBKL1B and STK38. Interacts with RASSF2 (via SARAH domain). Interacts with DLG5 (via PDZ domain 3). Interacts with LATS1; this interaction is inhibited in the presence of DLG5. Interacts with MARK3 in the presence of DLG5. Interacts with RASSF5; this interaction inhibits STK3 autoactivation through heterodimerization. Interacts (when phosphorylated) with SLMAP (via FHA domain); the interaction associates STK3 with the STRIPAK complex. Requires Mg(2+) as cofactor. Autophosphorylated on two residues Thr-174 and Thr-180, leading to activation. Phosphorylation at Thr-117 and Thr-384 by PKB/AKT1, leads to inhibition of its: cleavage, kinase activity, autophosphorylation at Thr-180, binding to RASSF1 and nuclear translocation, and increase in its binding to RAF1. Phosphorylated at Ser-15 by PLK1, leading to activation. Post-translationally, proteolytically cleaved by caspase-3 during apoptosis. Proteolytic cleavage results in kinase activation and nuclear translocation of the truncated form (MST1/N). In terms of processing, ubiquitinated by TRIM69; leading to its redistribution to the perinuclear cytoskeleton.

It is found in the cytoplasm. Its subcellular location is the nucleus. It catalyses the reaction L-seryl-[protein] + ATP = O-phospho-L-seryl-[protein] + ADP + H(+). It carries out the reaction L-threonyl-[protein] + ATP = O-phospho-L-threonyl-[protein] + ADP + H(+). Inhibited by the C-terminal non-catalytic region. Activated by caspase-cleavage. Full activation also requires homodimerization and autophosphorylation of Thr-180, which are inhibited by the proto-oncogene product RAF1. Activated by RASSF1 which acts by preventing its dephosphorylation. When autophosphorylated at Thr-180, recruits STRIPAK complex and promotes PP2A-mediated dephosphorylation and inactivation of STK3. Stress-activated, pro-apoptotic kinase which, following caspase-cleavage, enters the nucleus and induces chromatin condensation followed by internucleosomal DNA fragmentation. Key component of the Hippo signaling pathway which plays a pivotal role in organ size control and tumor suppression by restricting proliferation and promoting apoptosis. The core of this pathway is composed of a kinase cascade wherein STK3/MST2 and STK4/MST1, in complex with its regulatory protein SAV1, phosphorylates and activates LATS1/2 in complex with its regulatory protein MOB1, which in turn phosphorylates and inactivates YAP1 oncoprotein and WWTR1/TAZ. Phosphorylation of YAP1 by LATS2 inhibits its translocation into the nucleus to regulate cellular genes important for cell proliferation, cell death, and cell migration. STK3/MST2 and STK4/MST1 are required to repress proliferation of mature hepatocytes, to prevent activation of facultative adult liver stem cells (oval cells), and to inhibit tumor formation. Phosphorylates NKX2-1. Phosphorylates NEK2 and plays a role in centrosome disjunction by regulating the localization of NEK2 to centrosomes, and its ability to phosphorylate CROCC and CEP250. In conjunction with SAV1, activates the transcriptional activity of ESR1 through the modulation of its phosphorylation. Positively regulates RAF1 activation via suppression of the inhibitory phosphorylation of RAF1 on 'Ser-259'. Phosphorylates MOBKL1A and RASSF2. Phosphorylates MOBKL1B on 'Thr-74'. Acts cooperatively with MOBKL1B to activate STK38. The chain is Serine/threonine-protein kinase 3 (Stk3) from Rattus norvegicus (Rat).